The chain runs to 518 residues: FAD-dependent monooxygenase tpcD (518 aa).

The first 22 residues, 1 to 22 (MQLLGTLSWLYAIQASIGSSKA), serve as a signal peptide directing secretion. Residue Asn-61 is glycosylated (N-linked (GlcNAc...) asparagine). Residues 75-246 (QSAQPACLVH…TRFDLDVFQQ (172 aa)) form the FAD-binding PCMH-type domain. His-112 carries the pros-8alpha-FAD histidine modification. N-linked (GlcNAc...) asparagine glycans are attached at residues Asn-163, Asn-208, Asn-216, and Asn-346.

It belongs to the oxygen-dependent FAD-linked oxidoreductase family. FAD serves as cofactor.

It functions in the pathway secondary metabolite biosynthesis; terpenoid biosynthesis. FAD-dependent monooxygenase; part of the gene cluster that mediates the biosynthesis of terpestacin. The bifunctional terpene synthase tpcA converts isopentenyl diphosphate (IPP) and dimethylallyl diphosphate (DMAPP) into the sesterterpene preterpestacin I. The C-terminal prenyltransferase (PT) domain of tpcA catalyzes formation of GFPP, whereas the N-terminal terpene cyclase (TC) domain catalyzes the cyclization of GFPP into preterpestacin I. The cytochrome P450 monooxygenase tpcB then hydroxylates preterpestacin I to yield 24-hydroxypreterpstacin I (renamed as preterpestacin II) whereas the cytochrome P450 monooxygenase tpcC further hydroxylates preterpestacin II to yield 16,17-dihydroxypreterpestacin II (renamed as preterpestacin III). Finally, the FAD-dependent monooxygenase tpcD converts preterpestacin III into terpestacin. The protein is FAD-dependent monooxygenase tpcD of Cochliobolus heterostrophus (strain C5 / ATCC 48332 / race O) (Southern corn leaf blight fungus).